A 212-amino-acid chain; its full sequence is MQILLAALIAYLIGSVSFAVIVSAAMGLADPRSYGSKNPGATNVLRSGNKKAAILTLIGDAFKGWIAVWLARRYGLPDVAIAWVAIAVFIGHLYPVFFRFQGGKGVATAAGVLLAVHPVLGLATALTWLIIAFFFRYSSLAALVAAVFAPLFDVFLFGTNHNPIAWAVLAMSVLLVWRHRGNIAKLLAGEESRIGDKKKAAANGNAQDGGKA.

Helical transmembrane passes span 3–23, 51–71, 78–98, 115–135, and 139–159; these read ILLAALIAYLIGSVSFAVIVS, KAAILTLIGDAFKGWIAVWLA, DVAIAWVAIAVFIGHLYPVFF, AVHPVLGLATALTWLIIAFFF, and SLAALVAAVFAPLFDVFLFGT.

The protein belongs to the PlsY family. Probably interacts with PlsX.

It is found in the cell inner membrane. The enzyme catalyses an acyl phosphate + sn-glycerol 3-phosphate = a 1-acyl-sn-glycero-3-phosphate + phosphate. It functions in the pathway lipid metabolism; phospholipid metabolism. In terms of biological role, catalyzes the transfer of an acyl group from acyl-phosphate (acyl-PO(4)) to glycerol-3-phosphate (G3P) to form lysophosphatidic acid (LPA). This enzyme utilizes acyl-phosphate as fatty acyl donor, but not acyl-CoA or acyl-ACP. This Burkholderia multivorans (strain ATCC 17616 / 249) protein is Glycerol-3-phosphate acyltransferase.